A 361-amino-acid polypeptide reads, in one-letter code: Spermatogenesis-associated protein 17 (361 aa).

IQ domains lie at E32–I61, L55–Y84, and Y91–Y120.

Its subcellular location is the cytoplasm. The chain is Spermatogenesis-associated protein 17 (SPATA17) from Homo sapiens (Human).